A 141-amino-acid polypeptide reads, in one-letter code: Hemoglobin subunit alpha (141 aa).

The 141-residue stretch at 1-141 (VLSANDKSNV…VSTVLTSKYR (141 aa)) folds into the Globin domain. S3 bears the Phosphoserine mark. An N6-succinyllysine mark is found at K7 and K11. K16 carries the N6-acetyllysine; alternate modification. Position 16 is an N6-succinyllysine; alternate (K16). Y24 is modified (phosphotyrosine). A Phosphoserine modification is found at S35. Residue K40 is modified to N6-succinyllysine. Position 49 is a phosphoserine (S49). An O2-binding site is contributed by H58. A heme b-binding site is contributed by H87. S102 carries the post-translational modification Phosphoserine. A Phosphothreonine modification is found at T108. A Phosphoserine modification is found at S124. 2 positions are modified to phosphothreonine: T134 and T137. At S138 the chain carries Phosphoserine.

The protein belongs to the globin family. Heterotetramer of two alpha chains and two beta chains. As to expression, red blood cells.

Its function is as follows. Involved in oxygen transport from the lung to the various peripheral tissues. Functionally, hemopressin acts as an antagonist peptide of the cannabinoid receptor CNR1. Hemopressin-binding efficiently blocks cannabinoid receptor CNR1 and subsequent signaling. This chain is Hemoglobin subunit alpha (HBA), found in Hippopotamus amphibius (Hippopotamus).